We begin with the raw amino-acid sequence, 145 residues long: MFDNLQRKFLNLIGIEIEEEDKPQEVSKTKDENAKPKHETPKVVTIGKANQTEVTVYNLKLFDEVVKVCDALRENKIVVFNLEQVAEEHIQRIIDFVSGAVYVLDAKIHKVSKKIFVVVPRSIDLEVDEQLKEEFRSKGVFAWLK.

Residues 23–41 show a composition bias toward basic and acidic residues; it reads PQEVSKTKDENAKPKHETP. Residues 23-42 are disordered; that stretch reads PQEVSKTKDENAKPKHETPK.

This sequence belongs to the SepF family. In terms of assembly, homodimer. Interacts with FtsZ.

It localises to the cytoplasm. Its function is as follows. Cell division protein that is part of the divisome complex and is recruited early to the Z-ring. Probably stimulates Z-ring formation, perhaps through the cross-linking of FtsZ protofilaments. Its function overlaps with FtsA. In Caldicellulosiruptor bescii (strain ATCC BAA-1888 / DSM 6725 / KCTC 15123 / Z-1320) (Anaerocellum thermophilum), this protein is Cell division protein SepF.